Here is a 1116-residue protein sequence, read N- to C-terminus: Angiopoietin-1 receptor (1116 aa).

A signal peptide spans 1-21 (MCLLDSCTALLLLGCWMSGSA). The Extracellular segment spans residues 22–745 (VRISDVTLVN…FAAHGHLLLY (724 aa)). Cys-46 and Cys-106 are oxidised to a cystine. Residues 46 to 126 (CVSSDWSSGG…YTYKMLQEAA (81 aa)) form the Ig-like C2-type 1 domain. N-linked (GlcNAc...) asparagine glycosylation is found at Asn-110, Asn-143, and Asn-223. 3 consecutive EGF-like domains span residues 214-256 (SCRA…HTCD), 258-302 (VCGE…LSCN), and 304-342 (ACPD…SRCE). Intrachain disulfides connect Cys-215-Cys-224, Cys-228-Cys-237, Cys-231-Cys-244, Cys-246-Cys-255, Cys-259-Cys-268, Cys-272-Cys-277, Cys-283-Cys-290, Cys-292-Cys-301, Cys-305-Cys-314, Cys-318-Cys-325, Cys-320-Cys-331, and Cys-333-Cys-341. An Ig-like C2-type 2 domain is found at 348 to 438 (PVISHLRDVE…MQVEDEFTVE (91 aa)). 3 N-linked (GlcNAc...) asparagine glycosylation sites follow: Asn-367, Asn-387, and Asn-425. The cysteines at positions 368 and 422 are disulfide-linked. 3 Fibronectin type-III domains span residues 444 to 538 (RPQN…TQVL), 540 to 633 (LPVG…QLPP), and 634 to 729 (PPAN…TLPQ). N-linked (GlcNAc...) asparagine glycosylation is found at Asn-590, Asn-637, and Asn-642. Residues 746 to 766 (AILGSAGMTCCTVLLAFCIVL) traverse the membrane as a helical segment. The Cytoplasmic segment spans residues 767 to 1116 (QLKRNTLQRR…GIDCSAEEAG (350 aa)). A Protein kinase domain is found at 816–1095 (IQFQDVLGEG…RMLEERKTYV (280 aa)). ATP-binding positions include 822-830 (LGEGNFGQV) and Lys-847. The residue at position 852 (Tyr-852) is a Phosphotyrosine; by autocatalysis. The Proton acceptor role is filled by Asp-956. 3 positions are modified to phosphotyrosine; by autocatalysis: Tyr-984, Tyr-1094, and Tyr-1100.

This sequence belongs to the protein kinase superfamily. Tyr protein kinase family. Tie subfamily. As to quaternary structure, interacts with svep1. Post-translationally, autophosphorylated on tyrosine residues in response to ligand binding. Autophosphorylation occurs in trans, i.e. one subunit of the dimeric receptor phosphorylates tyrosine residues on the other subunit. Autophosphorylation occurs in a sequential manner, where Tyr-984 in the kinase activation loop is phosphorylated first, followed by autophosphorylation at additional tyrosine residues. Phosphorylation is important for interaction with scaffold proteins and effectors.

The protein resides in the cell membrane. It is found in the cell junction. The protein localises to the focal adhesion. It localises to the cytoplasm. Its subcellular location is the cytoskeleton. The enzyme catalyses L-tyrosyl-[protein] + ATP = O-phospho-L-tyrosyl-[protein] + ADP + H(+). With respect to regulation, angiopoietin binding leads to receptor dimerization and activation by autophosphorylation at Tyr-984 on the kinase activation loop. Functionally, tyrosine-protein kinase that acts as a cell-surface receptor for angiopoietins and regulates angiogenesis, endothelial cell survival, proliferation, migration, adhesion and cell spreading, reorganization of the actin cytoskeleton, but also maintenance of vascular quiescence. Can activate or inhibit angiogenesis, depending on the context. Angiopoietin signaling triggers receptor dimerization and autophosphorylation at specific tyrosine residues that then serve as binding sites for scaffold proteins and effectors. The protein is Angiopoietin-1 receptor of Danio rerio (Zebrafish).